A 559-amino-acid chain; its full sequence is Formate--tetrahydrofolate ligase (559 aa).

Residue 68-75 (TPAGEGKS) coordinates ATP.

Belongs to the formate--tetrahydrofolate ligase family.

The catalysed reaction is (6S)-5,6,7,8-tetrahydrofolate + formate + ATP = (6R)-10-formyltetrahydrofolate + ADP + phosphate. The protein operates within one-carbon metabolism; tetrahydrofolate interconversion. The sequence is that of Formate--tetrahydrofolate ligase from Bacillus licheniformis (strain ATCC 14580 / DSM 13 / JCM 2505 / CCUG 7422 / NBRC 12200 / NCIMB 9375 / NCTC 10341 / NRRL NRS-1264 / Gibson 46).